Here is a 165-residue protein sequence, read N- to C-terminus: MKNIVLGGGCFWCVEAVFERLKGVIDTEVGYSGGNPNPSYESVCNGDGNIEVVKINYDEKQISLLEILTLFFKIHDPTSIDKQGGDIGIQYRSIIFYENEEDKILAQNFIEEQQKIFSKKIVTKISRLQTYYKAENYHQHYFINNPNQGYCQAVIAPKLQKIQSG.

Residue cysteine 10 is part of the active site.

The protein belongs to the MsrA Met sulfoxide reductase family.

It catalyses the reaction L-methionyl-[protein] + [thioredoxin]-disulfide + H2O = L-methionyl-(S)-S-oxide-[protein] + [thioredoxin]-dithiol. It carries out the reaction [thioredoxin]-disulfide + L-methionine + H2O = L-methionine (S)-S-oxide + [thioredoxin]-dithiol. Functionally, has an important function as a repair enzyme for proteins that have been inactivated by oxidation. Catalyzes the reversible oxidation-reduction of methionine sulfoxide in proteins to methionine. The sequence is that of Peptide methionine sulfoxide reductase MsrA from Campylobacter jejuni subsp. jejuni serotype O:6 (strain 81116 / NCTC 11828).